The following is a 23-amino-acid chain: Acidic phospholipase A2 Cvv-E6c (23 aa).

Requires Ca(2+) as cofactor. In terms of processing, contains 7 disulfide bonds. In terms of tissue distribution, expressed by the venom gland.

Its subcellular location is the secreted. The enzyme catalyses a 1,2-diacyl-sn-glycero-3-phosphocholine + H2O = a 1-acyl-sn-glycero-3-phosphocholine + a fatty acid + H(+). Its function is as follows. Snake venom phospholipase A2 (PLA2) that significantly inhibits ADP-induced platelet aggregation in platelet-rich plasma of human, rabbit and guinea pig. PLA2 catalyzes the calcium-dependent hydrolysis of the 2-acyl groups in 3-sn-phosphoglycerides. The polypeptide is Acidic phospholipase A2 Cvv-E6c (Crotalus viridis viridis (Prairie rattlesnake)).